The primary structure comprises 227 residues: Cytochrome c oxidase subunit 2 (227 aa).

At 1–14 (MAYPFQLGFQDATS) the chain is on the mitochondrial intermembrane side. The helical transmembrane segment at 15–45 (PIMEELLHFHDHTLMIVFLISSLVLYIISLM) threads the bilayer. The Mitochondrial matrix portion of the chain corresponds to 46 to 59 (LTTKLTHTSTMDAQ). A helical membrane pass occupies residues 60-87 (EVETIWTILPAIILILIALPSLRILYMM). Topologically, residues 88–227 (DEINNPSLTV…HFEKWSASML (140 aa)) are mitochondrial intermembrane. 6 residues coordinate Cu cation: His161, Cys196, Glu198, Cys200, His204, and Met207. Position 198 (Glu198) interacts with Mg(2+).

It belongs to the cytochrome c oxidase subunit 2 family. As to quaternary structure, component of the cytochrome c oxidase (complex IV, CIV), a multisubunit enzyme composed of 14 subunits. The complex is composed of a catalytic core of 3 subunits MT-CO1, MT-CO2 and MT-CO3, encoded in the mitochondrial DNA, and 11 supernumerary subunits COX4I, COX5A, COX5B, COX6A, COX6B, COX6C, COX7A, COX7B, COX7C, COX8 and NDUFA4, which are encoded in the nuclear genome. The complex exists as a monomer or a dimer and forms supercomplexes (SCs) in the inner mitochondrial membrane with NADH-ubiquinone oxidoreductase (complex I, CI) and ubiquinol-cytochrome c oxidoreductase (cytochrome b-c1 complex, complex III, CIII), resulting in different assemblies (supercomplex SCI(1)III(2)IV(1) and megacomplex MCI(2)III(2)IV(2)). Found in a complex with TMEM177, COA6, COX18, COX20, SCO1 and SCO2. Interacts with TMEM177 in a COX20-dependent manner. Interacts with COX20. Interacts with COX16. Cu cation serves as cofactor.

It is found in the mitochondrion inner membrane. It catalyses the reaction 4 Fe(II)-[cytochrome c] + O2 + 8 H(+)(in) = 4 Fe(III)-[cytochrome c] + 2 H2O + 4 H(+)(out). Functionally, component of the cytochrome c oxidase, the last enzyme in the mitochondrial electron transport chain which drives oxidative phosphorylation. The respiratory chain contains 3 multisubunit complexes succinate dehydrogenase (complex II, CII), ubiquinol-cytochrome c oxidoreductase (cytochrome b-c1 complex, complex III, CIII) and cytochrome c oxidase (complex IV, CIV), that cooperate to transfer electrons derived from NADH and succinate to molecular oxygen, creating an electrochemical gradient over the inner membrane that drives transmembrane transport and the ATP synthase. Cytochrome c oxidase is the component of the respiratory chain that catalyzes the reduction of oxygen to water. Electrons originating from reduced cytochrome c in the intermembrane space (IMS) are transferred via the dinuclear copper A center (CU(A)) of subunit 2 and heme A of subunit 1 to the active site in subunit 1, a binuclear center (BNC) formed by heme A3 and copper B (CU(B)). The BNC reduces molecular oxygen to 2 water molecules using 4 electrons from cytochrome c in the IMS and 4 protons from the mitochondrial matrix. This Ceratotherium simum (White rhinoceros) protein is Cytochrome c oxidase subunit 2 (MT-CO2).